A 220-amino-acid chain; its full sequence is Putative NAD(P)H nitroreductase (220 aa).

155–160 contacts NAD(+); it reads GASALG.

Belongs to the nitroreductase family. It depends on FMN as a cofactor.

This is Putative NAD(P)H nitroreductase from Haemophilus influenzae (strain ATCC 51907 / DSM 11121 / KW20 / Rd).